A 506-amino-acid chain; its full sequence is Xaa-Pro aminopeptidase 3 (506 aa).

The transit peptide at 1 to 31 (MPSLLSTPKLAPVLARLRGLSGCMSCLQRRY) directs the protein to the mitochondrion. An interaction with TNFRSF1B region spans residues 54–79 (HPHLLRPGEVTPGLSQVEYALRRHKL). Substrate is bound by residues Tyr300, Asp331, Asp342, His423, His430, Glu450, and Glu474. Mn(2+)-binding residues include Asp331, Asp342, and His423. Residues Glu450 and Glu474 each coordinate Mn(2+).

This sequence belongs to the peptidase M24B family. Homodimer. Interacts with TNFRSF1B/TNFR2 (activated) and TRAF2. It depends on Mn(2+) as a cofactor. Expressed in brain, kidney, heart, liver, skeletal muscle and testis.

It is found in the mitochondrion. The protein resides in the cytoplasm. It carries out the reaction Release of any N-terminal amino acid, including proline, that is linked to proline, even from a dipeptide or tripeptide.. In terms of biological role, catalyzes the removal of a penultimate prolyl residue from the N-termini of peptides, such as Leu-Pro-Ala. Also shows low activity towards peptides with Ala or Ser at the P1 position. Promotes TNFRSF1B-mediated phosphorylation of MAPK8/JNK1 and MAPK9/JNK2, suggesting a function as an adapter protein for TNFRSF1B; the effect is independent of XPNPEP3 peptidase activity. May inhibit apoptotic cell death induced via TNF-TNFRSF1B signaling. This chain is Xaa-Pro aminopeptidase 3 (Xpnpep3), found in Mus musculus (Mouse).